Reading from the N-terminus, the 65-residue chain is Large ribosomal subunit protein bL35 (65 aa).

Positions 1–16 (MPKQKTHRASAKRFKR) are enriched in basic residues. The interval 1–21 (MPKQKTHRASAKRFKRTGSGG) is disordered.

This sequence belongs to the bacterial ribosomal protein bL35 family.

The sequence is that of Large ribosomal subunit protein bL35 from Streptococcus pyogenes serotype M18 (strain MGAS8232).